The primary structure comprises 394 residues: Protein TsgA homolog (394 aa).

The next 12 helical transmembrane spans lie at 11-31, 51-71, 76-96, 101-121, 134-154, 162-182, 206-226, 246-266, 274-294, 302-322, 334-354, and 363-383; these read WISY…GIVM, FLNA…EIIP, LVFG…GHNL, ISMF…TFLV, LLFT…AAAM, WYWV…LTLC, VGVL…LGFI, QLVS…SFIL, IVTV…STDN, ILAL…LGSL, FILT…GPIV, and LATA…LGFF.

The protein belongs to the major facilitator superfamily. TsgA family.

It localises to the cell inner membrane. This Yersinia pseudotuberculosis serotype O:1b (strain IP 31758) protein is Protein TsgA homolog.